The chain runs to 360 residues: Phenylalanine--tRNA ligase alpha subunit (360 aa).

Glutamate 260 lines the Mg(2+) pocket.

This sequence belongs to the class-II aminoacyl-tRNA synthetase family. Phe-tRNA synthetase alpha subunit type 1 subfamily. In terms of assembly, tetramer of two alpha and two beta subunits. Mg(2+) serves as cofactor.

Its subcellular location is the cytoplasm. It catalyses the reaction tRNA(Phe) + L-phenylalanine + ATP = L-phenylalanyl-tRNA(Phe) + AMP + diphosphate + H(+). This is Phenylalanine--tRNA ligase alpha subunit from Sinorhizobium medicae (strain WSM419) (Ensifer medicae).